A 456-amino-acid chain; its full sequence is Phosphomethylpyrimidine synthase (456 aa).

Substrate is bound by residues N80, M109, Y139, H175, 195 to 197, 236 to 239, and E275; these read SRG and DSLR. H279 is a binding site for Zn(2+). Residue Y302 participates in substrate binding. Residue H343 participates in Zn(2+) binding. The [4Fe-4S] cluster site is built by C423, C426, and C431.

The protein belongs to the ThiC family. Requires [4Fe-4S] cluster as cofactor.

It carries out the reaction 5-amino-1-(5-phospho-beta-D-ribosyl)imidazole + S-adenosyl-L-methionine = 4-amino-2-methyl-5-(phosphooxymethyl)pyrimidine + CO + 5'-deoxyadenosine + formate + L-methionine + 3 H(+). The protein operates within cofactor biosynthesis; thiamine diphosphate biosynthesis. In terms of biological role, catalyzes the synthesis of the hydroxymethylpyrimidine phosphate (HMP-P) moiety of thiamine from aminoimidazole ribotide (AIR) in a radical S-adenosyl-L-methionine (SAM)-dependent reaction. This chain is Phosphomethylpyrimidine synthase, found in Prochlorococcus marinus (strain MIT 9215).